A 505-amino-acid chain; its full sequence is Catalase (505 aa).

Residues Met-1–Ala-25 form a disordered region. Catalysis depends on residues His-56 and Asn-129. Tyr-339 provides a ligand contact to heme.

Belongs to the catalase family. Homodimer. It depends on heme as a cofactor.

The enzyme catalyses 2 H2O2 = O2 + 2 H2O. Its function is as follows. Decomposes hydrogen peroxide into water and oxygen; serves to protect cells from the toxic effects of hydrogen peroxide. The chain is Catalase (katA) from Staphylococcus warneri.